Consider the following 352-residue polypeptide: Heat-inducible transcription repressor HrcA (352 aa).

The protein belongs to the HrcA family.

Functionally, negative regulator of class I heat shock genes (grpE-dnaK-dnaJ and groELS operons). Prevents heat-shock induction of these operons. The protein is Heat-inducible transcription repressor HrcA of Prochlorococcus marinus (strain MIT 9313).